We begin with the raw amino-acid sequence, 602 residues long: Potassium-transporting ATPase potassium-binding subunit (602 aa).

10 helical membrane-spanning segments follow: residues 3–23 (ANNL…AVPV), 64–84 (QYAL…YALL), 135–155 (GLTV…LALI), 178–198 (LYVL…QGVI), 282–302 (FSNF…CLVF), 313–333 (VAVL…ETSA), 418–438 (GLYG…LMIG), 456–476 (VSIV…IAVL), 522–542 (WMTA…VLAI), and 565–585 (LFVV…YMPA).

It belongs to the KdpA family. As to quaternary structure, the system is composed of three essential subunits: KdpA, KdpB and KdpC.

The protein localises to the cell inner membrane. In terms of biological role, part of the high-affinity ATP-driven potassium transport (or Kdp) system, which catalyzes the hydrolysis of ATP coupled with the electrogenic transport of potassium into the cytoplasm. This subunit binds the periplasmic potassium ions and delivers the ions to the membrane domain of KdpB through an intramembrane tunnel. This chain is Potassium-transporting ATPase potassium-binding subunit, found in Burkholderia pseudomallei (strain K96243).